Consider the following 416-residue polypeptide: Phosphoglycerate kinase (416 aa).

14 residues coordinate (2R)-3-phosphoglycerate: V23, D24, F25, N26, Q38, R39, S62, H63, G65, R66, L121, R122, H168, and R169. G212 provides a ligand contact to ADP. G212 lines the CDP pocket. 2 residues coordinate AMP: A213 and K214. A213 contacts ATP. Residue A213 participates in Mg(2+) binding. 2 residues coordinate Mg(2+): A216 and D217. D217 is a CDP binding site. K218 lines the AMP pocket. An ATP-binding site is contributed by K218. ADP is bound at residue G236. Residue G236 participates in CDP binding. AMP contacts are provided by G237 and G311. ATP-binding residues include G237 and G311. The CDP site is built by G336 and F341. Residue F341 coordinates ADP. Residue E342 participates in AMP binding. 3 residues coordinate ATP: E342, D373, and T374. D373 provides a ligand contact to Mg(2+).

This sequence belongs to the phosphoglycerate kinase family. Monomer. The cofactor is Mg(2+).

The protein resides in the cytoplasm. Its subcellular location is the mitochondrion. The enzyme catalyses (2R)-3-phosphoglycerate + ATP = (2R)-3-phospho-glyceroyl phosphate + ADP. Its pathway is carbohydrate degradation; glycolysis; pyruvate from D-glyceraldehyde 3-phosphate: step 2/5. In terms of biological role, catalyzes one of the two ATP producing reactions in the glycolytic pathway via the reversible conversion of 1,3-diphosphoglycerate to 3-phosphoglycerate. Both L- and D- forms of purine and pyrimidine nucleotides can be used as substrates, but the activity is much lower on pyrimidines. Negatively regulates the biosynthesis of acetyl-CoA from pyruvate in the mitochondrion. This Eremothecium gossypii (strain ATCC 10895 / CBS 109.51 / FGSC 9923 / NRRL Y-1056) (Yeast) protein is Phosphoglycerate kinase (PGK1).